A 289-amino-acid chain; its full sequence is Tachykinins (289 aa).

The signal sequence occupies residues 1 to 24 (MRSQGGSFAVALLLLLLLTAAATA). Positions 25–49 (ADAEPDVESSVSTLPPGADAPRRMV) are excised as a propeptide. Residues 28–80 (EPDVESSVSTLPPGADAPRRMVKRAPTSSFIGMRGKKEDEKDQRAADWMGPDP) form a disordered region. Residue Arg-61 is modified to Arginine amide. Residues 62–72 (GKKEDEKDQRA) show a composition bias toward basic and acidic residues. An Asparagine amide modification is found at Asn-95. Arg-110 carries the post-translational modification Arginine amide. Val-155 bears the Valine amide mark. The disordered stretch occupies residues 156 to 175 (GKRAPTGFTGMRGKRPMSGD). Residues Arg-167, Arg-198, Arg-237, and Arg-281 each carry the arginine amide modification. A propeptide spanning residues 285-289 (PALAE) is cleaved from the precursor.

It belongs to the tachykinin family.

The protein localises to the secreted. Tachykinins are active peptides which excite neurons, evoke behavioral responses, are potent vasodilators and secretagogues, and contract (directly or indirectly) many smooth muscles. Stimulates gut muscle contractions. This is Tachykinins from Drosophila pseudoobscura pseudoobscura (Fruit fly).